We begin with the raw amino-acid sequence, 670 residues long: uncharacterized protein (670 aa).

Helical transmembrane passes span 23–42 (YALR…YYLN), 47–69 (YWAM…SKSL), 76–98 (LLGA…FFLL), 118–140 (VAYA…VNIT), 153–170 (VCEV…MMIL), 381–403 (QWDA…SAVA), 410–432 (SLLM…GLMV), 437–454 (LWQF…MQLL), 461–483 (FAAL…NPPV), and 493–510 (NLAK…FAIL).

The protein belongs to the aromatic acid exporter ArAE (TC 2.A.85) family.

Its subcellular location is the cell membrane. This is an uncharacterized protein from Escherichia coli (strain K12).